We begin with the raw amino-acid sequence, 360 residues long: Geranylgeranyl pyrophosphate synthase 12, chloroplastic (360 aa).

Residues 1 to 39 constitute a chloroplast transit peptide; it reads MANTVHLSSSSLFIQTRGRKYNSILSFNNLQKRTVLSLS. Isopentenyl diphosphate is bound by residues K106, R109, and H138. Mg(2+) contacts are provided by D145 and D151. R156 serves as a coordination point for dimethylallyl diphosphate. Position 157 (R157) interacts with isopentenyl diphosphate. Positions 245, 246, 283, 300, and 310 each coordinate dimethylallyl diphosphate.

This sequence belongs to the FPP/GGPP synthase family. As to quaternary structure, monomer. The cofactor is Mg(2+).

It localises to the plastid. It is found in the chloroplast. It carries out the reaction isopentenyl diphosphate + dimethylallyl diphosphate = (2E)-geranyl diphosphate + diphosphate. The enzyme catalyses isopentenyl diphosphate + (2E)-geranyl diphosphate = (2E,6E)-farnesyl diphosphate + diphosphate. It catalyses the reaction isopentenyl diphosphate + (2E,6E)-farnesyl diphosphate = (2E,6E,10E)-geranylgeranyl diphosphate + diphosphate. It participates in isoprenoid biosynthesis; farnesyl diphosphate biosynthesis; farnesyl diphosphate from geranyl diphosphate and isopentenyl diphosphate: step 1/1. Its pathway is isoprenoid biosynthesis; geranyl diphosphate biosynthesis; geranyl diphosphate from dimethylallyl diphosphate and isopentenyl diphosphate: step 1/1. It functions in the pathway isoprenoid biosynthesis; geranylgeranyl diphosphate biosynthesis; geranylgeranyl diphosphate from farnesyl diphosphate and isopentenyl diphosphate: step 1/1. Functionally, catalyzes the trans-addition of the three molecules of IPP onto DMAPP to form geranylgeranyl pyrophosphate. The chain is Geranylgeranyl pyrophosphate synthase 12, chloroplastic from Arabidopsis thaliana (Mouse-ear cress).